The primary structure comprises 170 residues: NADH-quinone oxidoreductase subunit B (170 aa).

Residues Cys42, Cys43, Cys107, and Cys136 each coordinate [4Fe-4S] cluster.

It belongs to the complex I 20 kDa subunit family. In terms of assembly, NDH-1 is composed of 14 different subunits. Subunits NuoB, C, D, E, F, and G constitute the peripheral sector of the complex. It depends on [4Fe-4S] cluster as a cofactor.

The protein resides in the cell inner membrane. The catalysed reaction is a quinone + NADH + 5 H(+)(in) = a quinol + NAD(+) + 4 H(+)(out). Its function is as follows. NDH-1 shuttles electrons from NADH, via FMN and iron-sulfur (Fe-S) centers, to quinones in the respiratory chain. The immediate electron acceptor for the enzyme in this species is believed to be ubiquinone. Couples the redox reaction to proton translocation (for every two electrons transferred, four hydrogen ions are translocated across the cytoplasmic membrane), and thus conserves the redox energy in a proton gradient. This chain is NADH-quinone oxidoreductase subunit B, found in Campylobacter concisus (strain 13826).